A 155-amino-acid polypeptide reads, in one-letter code: S-ribosylhomocysteine lyase (155 aa).

Fe cation is bound by residues histidine 58, histidine 62, and cysteine 125.

This sequence belongs to the LuxS family. Homodimer. Fe cation is required as a cofactor.

The catalysed reaction is S-(5-deoxy-D-ribos-5-yl)-L-homocysteine = (S)-4,5-dihydroxypentane-2,3-dione + L-homocysteine. Involved in the synthesis of autoinducer 2 (AI-2) which is secreted by bacteria and is used to communicate both the cell density and the metabolic potential of the environment. The regulation of gene expression in response to changes in cell density is called quorum sensing. Catalyzes the transformation of S-ribosylhomocysteine (RHC) to homocysteine (HC) and 4,5-dihydroxy-2,3-pentadione (DPD). The polypeptide is S-ribosylhomocysteine lyase (Helicobacter pylori (strain HPAG1)).